The sequence spans 322 residues: HPr kinase/phosphorylase (322 aa).

Active-site residues include His-146 and Lys-167. Residue 161–168 (GDSGLGKS) participates in ATP binding. Residue Ser-168 coordinates Mg(2+). The Proton acceptor; for phosphorylation activity. Proton donor; for dephosphorylation activity role is filled by Asp-185. The important for the catalytic mechanism of both phosphorylation and dephosphorylation stretch occupies residues 209–218 (LEVRGLGLLD). Residue Glu-210 participates in Mg(2+) binding. Arg-250 is an active-site residue. Residues 271-276 (QVAAGR) are important for the catalytic mechanism of dephosphorylation.

The protein belongs to the HPrK/P family. Homohexamer. Mg(2+) serves as cofactor.

The enzyme catalyses [HPr protein]-L-serine + ATP = [HPr protein]-O-phospho-L-serine + ADP + H(+). The catalysed reaction is [HPr protein]-O-phospho-L-serine + phosphate + H(+) = [HPr protein]-L-serine + diphosphate. Its function is as follows. Catalyzes the ATP- as well as the pyrophosphate-dependent phosphorylation of a specific serine residue in HPr, a phosphocarrier protein of the phosphoenolpyruvate-dependent sugar phosphotransferase system (PTS). HprK/P also catalyzes the pyrophosphate-producing, inorganic phosphate-dependent dephosphorylation (phosphorolysis) of seryl-phosphorylated HPr (P-Ser-HPr). This chain is HPr kinase/phosphorylase, found in Burkholderia multivorans (strain ATCC 17616 / 249).